Here is a 108-residue protein sequence, read N- to C-terminus: UPF0060 membrane protein KPK_2870 (108 aa).

4 helical membrane passes run 6-26 (LLFF…WLWL), 29-49 (GATP…VWLL), 61-81 (AAYG…VDGV), and 86-106 (YDWA…AGWG).

This sequence belongs to the UPF0060 family.

The protein resides in the cell inner membrane. The sequence is that of UPF0060 membrane protein KPK_2870 from Klebsiella pneumoniae (strain 342).